The chain runs to 65 residues: Defensin-B2 (65 aa).

Residues 1-23 (MEARVLLLCAVLFLLVHTPPAAG) form the signal peptide. 3 disulfides stabilise this stretch: Cys-29–Cys-56, Cys-36–Cys-50, and Cys-40–Cys-57.

The protein belongs to the beta-defensin family. As to expression, lowly expressed in spleen, and lung.

The protein resides in the secreted. Its function is as follows. Has antimicrobial activity. This Ornithorhynchus anatinus (Duckbill platypus) protein is Defensin-B2.